The primary structure comprises 198 residues: E3 ubiquitin-protein ligase rnf152 (198 aa).

The segment at 12–55 adopts an RING-type zinc-finger fold; that stretch reads CQICFNYFSQRRLPKLLHCQHTCCSVCLSQMRLSQREIRCPWCR. A helical membrane pass occupies residues 162–182; the sequence is TGVCTVLLVAFILIFLLGIVL.

The protein belongs to the RNF152 family.

The protein localises to the lysosome membrane. It carries out the reaction S-ubiquitinyl-[E2 ubiquitin-conjugating enzyme]-L-cysteine + [acceptor protein]-L-lysine = [E2 ubiquitin-conjugating enzyme]-L-cysteine + N(6)-ubiquitinyl-[acceptor protein]-L-lysine.. The protein operates within protein modification; protein ubiquitination. Its function is as follows. E3 ubiquitin-protein ligase that acts as a negative regulator of mTORC1 signaling by mediating ubiquitination of RagA/RRAGA and RHEB. Catalyzes 'Lys-63'-linked polyubiquitination of RagA/RRAGA in response to amino acid starvation, thereby regulating mTORC1 signaling. Also mediates monoubiquitination of RHEB, promoting its association with the TSC-TBC complex and subsequent inhibition. Also mediates 'Lys-48'-linked polyubiquitination of target proteins and their subsequent targeting to the proteasome for degradation. This Danio rerio (Zebrafish) protein is E3 ubiquitin-protein ligase rnf152.